Here is a 131-residue protein sequence, read N- to C-terminus: Methylglyoxal synthase (131 aa).

Residues 1-131 (MKIALIAHDK…GDLDYRKLRK (131 aa)) enclose the MGS-like domain. Substrate is bound by residues His8, Lys12, 34-37 (TGTT), and 54-55 (SG). Asp60 functions as the Proton donor/acceptor in the catalytic mechanism. His87 contacts substrate.

The protein belongs to the methylglyoxal synthase family.

The catalysed reaction is dihydroxyacetone phosphate = methylglyoxal + phosphate. Catalyzes the formation of methylglyoxal from dihydroxyacetone phosphate. The chain is Methylglyoxal synthase from Bacillus anthracis (strain A0248).